A 474-amino-acid chain; its full sequence is Glutamate--tRNA ligase 1 (474 aa).

The 'HIGH' region motif lies at 11-21 (PSPTGYLHIGG). The 'KMSKS' region motif lies at 240–244 (KLSKR). Lys-243 lines the ATP pocket.

Belongs to the class-I aminoacyl-tRNA synthetase family. Glutamate--tRNA ligase type 1 subfamily. In terms of assembly, monomer.

The protein resides in the cytoplasm. The catalysed reaction is tRNA(Glu) + L-glutamate + ATP = L-glutamyl-tRNA(Glu) + AMP + diphosphate. Functionally, catalyzes the attachment of glutamate to tRNA(Glu) in a two-step reaction: glutamate is first activated by ATP to form Glu-AMP and then transferred to the acceptor end of tRNA(Glu). The chain is Glutamate--tRNA ligase 1 from Mesorhizobium japonicum (strain LMG 29417 / CECT 9101 / MAFF 303099) (Mesorhizobium loti (strain MAFF 303099)).